We begin with the raw amino-acid sequence, 434 residues long: Histidinol dehydrogenase (434 aa).

Positions 130, 188, and 211 each coordinate NAD(+). Ser-237, Gln-259, and His-262 together coordinate substrate. Positions 259 and 262 each coordinate Zn(2+). Active-site proton acceptor residues include Glu-326 and His-327. Residues His-327, Asp-360, Glu-414, and His-419 each contribute to the substrate site. Residue Asp-360 coordinates Zn(2+). His-419 contacts Zn(2+).

The protein belongs to the histidinol dehydrogenase family. Homodimer. Zn(2+) serves as cofactor.

It carries out the reaction L-histidinol + 2 NAD(+) + H2O = L-histidine + 2 NADH + 3 H(+). It functions in the pathway amino-acid biosynthesis; L-histidine biosynthesis; L-histidine from 5-phospho-alpha-D-ribose 1-diphosphate: step 9/9. In terms of biological role, catalyzes the sequential NAD-dependent oxidations of L-histidinol to L-histidinaldehyde and then to L-histidine. This is Histidinol dehydrogenase from Salmonella typhi.